Reading from the N-terminus, the 118-residue chain is NADH-quinone oxidoreductase subunit A (118 aa).

A run of 3 helical transmembrane segments spans residues 5-25 (FAAV…MMLM), 61-81 (FLYA…FPWA), and 90-110 (FAFI…WYAW).

It belongs to the complex I subunit 3 family. As to quaternary structure, NDH-1 is composed of 14 different subunits. Subunits NuoA, H, J, K, L, M, N constitute the membrane sector of the complex.

Its subcellular location is the cell membrane. It catalyses the reaction a quinone + NADH + 5 H(+)(in) = a quinol + NAD(+) + 4 H(+)(out). Its function is as follows. NDH-1 shuttles electrons from NADH, via FMN and iron-sulfur (Fe-S) centers, to quinones in the respiratory chain. The immediate electron acceptor for the enzyme in this species is believed to be a menaquinone. Couples the redox reaction to proton translocation (for every two electrons transferred, four hydrogen ions are translocated across the cytoplasmic membrane), and thus conserves the redox energy in a proton gradient. The chain is NADH-quinone oxidoreductase subunit A from Desulfitobacterium hafniense (strain Y51).